The primary structure comprises 1205 residues: Nitric oxide synthase 3 (1205 aa).

Residues 1 to 73 form a disordered region; sequence MGNLKSVGQE…PPDGPKFPRV (73 aa). G2 carries N-myristoyl glycine lipidation. Residues C15 and C26 are each lipidated (S-palmitoyl cysteine). Gly residues predominate over residues 15 to 27; sequence CGLGLGLGLGLCG. Positions 44-54 are enriched in pro residues; the sequence is LAPPPSPPPAP. The Zn(2+) site is built by C96 and C101. The segment at 100-488 is interaction with NOSIP; the sequence is RCLGSLVFPR…TDPWKGSASK (389 aa). S104 is a binding site for (6R)-L-erythro-5,6,7,8-tetrahydrobiopterin. S116 is modified (phosphoserine; by CDK5). Residue C186 coordinates heme b. L-arginine contacts are provided by Q249, W358, Y359, E363, and N368. (6R)-L-erythro-5,6,7,8-tetrahydrobiopterin contacts are provided by A448, W449, and F462. Residue Y477 coordinates heme b. A calmodulin-binding region spans residues 492–512; that stretch reads VTRKKTFKEVANAVKISASLM. Phosphothreonine; by AMPK is present on T497. The region spanning 522–705 is the Flavodoxin-like domain; the sequence is ATILYGSETG…AFGGWAQAAF (184 aa). 6 residues coordinate FMN: S528, E529, T530, R532, S574, and T575. Phosphoserine occurs at positions 617, 635, and 640. Residues S656, C663, E689, and Q693 each coordinate FMN. One can recognise an FAD-binding FR-type domain in the interval 758 to 1004; sequence RKMVQATVLA…IRGAPSFRLP (247 aa). NADP(+) is bound at residue R778. H800 is an FAD binding site. The disordered stretch occupies residues 819-850; it reads VEDPPPPGEPVAVEQLEKGSPGGPPPSWVRDP. At S838 the chain carries Phosphoserine. Residues R940, Y942, S943, T958, A960, Y964, V977, C978, and S979 each coordinate FAD. Residues T1018, R1051, S1080, R1081, K1087, Y1089, and Q1091 each contribute to the NADP(+) site. A Phosphothreonine modification is found at T1177. Residue S1179 is modified to Phosphoserine; by AMPK. S1181 bears the Phosphoserine mark.

The protein belongs to the NOS family. Homodimer. Interacts with NOSIP and NOSTRIN. Interacts with HSP90AB1. Forms a complex with ASL, ASS1 and SLC7A1; the complex regulates cell-autonomous L-arginine synthesis and citrulline recycling while channeling extracellular L-arginine to nitric oxide synthesis pathway. Heme b serves as cofactor. Requires FAD as cofactor. FMN is required as a cofactor. The cofactor is (6R)-L-erythro-5,6,7,8-tetrahydrobiopterin. Phosphorylation by AMPK at Ser-1179 in the presence of Ca(2+)-calmodulin (CaM) activates activity. In absence of Ca(2+)-calmodulin, AMPK also phosphorylates Thr-497, resulting in inhibition of activity. Phosphorylation of Ser-116 by CDK5 reduces activity.

It is found in the membrane. Its subcellular location is the caveola. It localises to the cytoplasm. The protein localises to the cytoskeleton. The protein resides in the golgi apparatus. It is found in the cell membrane. The enzyme catalyses 2 L-arginine + 3 NADPH + 4 O2 + H(+) = 2 L-citrulline + 2 nitric oxide + 3 NADP(+) + 4 H2O. With respect to regulation, stimulated by calcium/calmodulin. Inhibited by NOSIP and NOSTRIN. Produces nitric oxide (NO) which is implicated in vascular smooth muscle relaxation through a cGMP-mediated signal transduction pathway. NO mediates vascular endothelial growth factor (VEGF)-induced angiogenesis in coronary vessels and promotes blood clotting through the activation of platelets. The chain is Nitric oxide synthase 3 (NOS3) from Canis lupus familiaris (Dog).